A 677-amino-acid polypeptide reads, in one-letter code: Methionine--tRNA ligase (677 aa).

Residues 15 to 25 (PYANGSIHLGH) carry the 'HIGH' region motif. Zn(2+) contacts are provided by C146, C149, C159, and C162. The 'KMSKS' region signature appears at 333–337 (KMSKS). Residue K336 coordinates ATP. Positions 575–677 (DFAKVDLRVA…AGAKPGHQVK (103 aa)) constitute a tRNA-binding domain.

It belongs to the class-I aminoacyl-tRNA synthetase family. MetG type 1 subfamily. Homodimer. Zn(2+) is required as a cofactor.

It is found in the cytoplasm. It carries out the reaction tRNA(Met) + L-methionine + ATP = L-methionyl-tRNA(Met) + AMP + diphosphate. In terms of biological role, is required not only for elongation of protein synthesis but also for the initiation of all mRNA translation through initiator tRNA(fMet) aminoacylation. The polypeptide is Methionine--tRNA ligase (Shigella flexneri serotype 5b (strain 8401)).